The sequence spans 446 residues: SWI/SNF chromatin-remodeling accessory subunit 1 (446 aa).

The disordered stretch occupies residues 1 to 53 (MQTQARPPVPQGPRFNHPATPQQVRRPINAPLPGQTAQIQGNRGPQPPKKKKR). Residues 220 to 297 (YQPMKFKLHP…PQRLHQLLQQ (78 aa)) form the SWIB/MDM2 domain.

Belongs to the SMARCD family. In terms of assembly, component of the multiprotein chromatin-remodeling complexes SWI/SNF: SWI/SNF-A (BAF), SWI/SNF-B (PBAF) and related complexes. The canonical complex contains a catalytic subunit swsn-4, core subunits swsn-1 and swsn-5, and accessory subunits swsn-3, swsn-6, phf-10, dpff-1, swsn-9 and either ham-3/swsn-2.1 or swsn-2.2. May interact with blmp-1. In terms of tissue distribution, broadly expressed in all cell types.

It localises to the nucleus. Its function is as follows. Involved in transcriptional activation and repression of select genes by chromatin remodeling (alteration of DNA-nucleosome topology). Component of SWI/SNF chromatin remodeling complexes that carry out key enzymatic activities, changing chromatin structure by altering DNA-histone contacts within a nucleosome in an ATP-dependent manner. Required for the blmp-1-mediated transcriptional activation or repression of several hypodermal genes such as bed-3. Involved in regulating differentiation, migration and axon pathfinding of specific serotonergic neurons (HSNs). Probably regulates vulva development through the let-60/Ras pathway. May be involved in regulation of developmental processes in the embryo driven by the Wnt pathway. Involved in gonadogenesis. This chain is SWI/SNF chromatin-remodeling accessory subunit 1, found in Caenorhabditis elegans.